Here is a 379-residue protein sequence, read N- to C-terminus: CCN family member 1 (379 aa).

The signal sequence occupies residues 1 to 24 (MSSSTIKTLAVAVTLLHLTRLALS). Residues 25-94 (TCPAACHCPL…TALKGICRAQ (70 aa)) enclose the IGFBP N-terminal domain. Cystine bridges form between C26–C50, C30–C52, C32–C53, C39–C56, C64–C78, and C70–C91. One can recognise a VWFC domain in the interval 98 to 164 (RPCEYNSRIY…GQCCEEWVCD (67 aa)). Phosphoserine is present on S184. One can recognise a TSP type-1 domain in the interval 226–271 (KCIVQTTSWSQCSKSCGTGISTRVTNDNSECRLVKETRICEVRPCG). A heparin-binding region spans residues 277 to 313 (SLKKGKKCSKTKKSPEPVRFTYAGCSSVKKYRPKYCG). 5 disulfide bridges follow: C284–C321, C301–C335, C312–C351, C315–C353, and C320–C357. The region spanning 284–358 (CSKTKKSPEP…QSCKCNYNCP (75 aa)) is the CTCK domain.

Belongs to the CCN family. In terms of assembly, interaction with integrins is heparin- and cell-type-dependent and promotes cell adhesion.

The protein resides in the secreted. Promotes cell proliferation, chemotaxis, angiogenesis and cell adhesion. Appears to play a role in wound healing by up-regulating, in skin fibroblasts, the expression of a number of genes involved in angiogenesis, inflammation and matrix remodeling including VEGA-A, VEGA-C, MMP1, MMP3, TIMP1, uPA, PAI-1 and integrins alpha-3 and alpha-5. CCN1-mediated gene regulation is dependent on heparin-binding. Down-regulates the expression of alpha-1 and alpha-2 subunits of collagen type-1. Promotes cell adhesion and adhesive signaling through integrin alpha-6/beta-1, cell migration through integrin alpha-1/beta-5 and cell proliferation through integrin alpha-v/beta-3. This Rattus norvegicus (Rat) protein is CCN family member 1.